Consider the following 443-residue polypeptide: Protein king tubby (443 aa).

2 disordered regions span residues threonine 57–arginine 80 and histidine 98–valine 191. The span at alanine 68–arginine 80 shows a compositional bias: polar residues. The span at glutamine 113 to glutamine 128 shows a compositional bias: low complexity. Serine 136 carries the phosphoserine modification. The span at asparagine 177–glutamate 186 shows a compositional bias: gly residues.

Belongs to the TUB family.

It is found in the cytoplasm. The protein resides in the nucleus. It localises to the cell projection. Its subcellular location is the cilium membrane. The protein localises to the rhabdomere. This Drosophila simulans (Fruit fly) protein is Protein king tubby.